Reading from the N-terminus, the 127-residue chain is UPF0102 protein SYNAS_23220 (127 aa).

This sequence belongs to the UPF0102 family.

The chain is UPF0102 protein SYNAS_23220 from Syntrophus aciditrophicus (strain SB).